Here is a 163-residue protein sequence, read N- to C-terminus: 18 kDa protein (163 aa).

This Mus musculus (Mouse) protein is 18 kDa protein.